The chain runs to 379 residues: Inositol 3-kinase (379 aa).

ATP contacts are provided by residues Ser-217, 267–270 (GAGD), and Asn-294. The Proton acceptor role is filled by Asp-270.

This sequence belongs to the carbohydrate kinase pfkB family.

The catalysed reaction is myo-inositol + ATP = 1D-myo-inositol 3-phosphate + ADP + H(+). Kinase that phosphorylates myo-inositol to produce multiple myo-inositol monophosphates, Ins(1)P, Ins(3)P, Ins(4)P, Ins(5)P and Ins(6)P. Participates in phytic acid biosynthesis in developing seeds. Phytic acid is the primary storage form of phosphorus in cereal grains and other plant seeds. This chain is Inositol 3-kinase, found in Zea mays (Maize).